A 429-amino-acid polypeptide reads, in one-letter code: Protein ORF66 (429 aa).

The protein belongs to the herpesviridae UL49 family. As to quaternary structure, interacts with ORF34.

It is found in the host nucleus. The protein localises to the host cytoplasm. In terms of biological role, participates in the expression of late viral mRNAs. The sequence is that of Protein ORF66 (ORF66) from Homo sapiens (Human).